A 154-amino-acid polypeptide reads, in one-letter code: 17.6 kDa class I heat shock protein (154 aa).

The sHSP domain occupies 40–154; that stretch reads ETSAFANTRI…PDVKSIEISG (115 aa).

This sequence belongs to the small heat shock protein (HSP20) family. In terms of assembly, forms oligomeric structures.

It is found in the cytoplasm. The protein is 17.6 kDa class I heat shock protein of Solanum peruvianum (Peruvian tomato).